A 77-amino-acid chain; its full sequence is P fimbrial regulatory protein KS71A (77 aa).

The sequence is that of P fimbrial regulatory protein KS71A (KS71A) from Escherichia coli.